Consider the following 392-residue polypeptide: Succinyl-diaminopimelate desuccinylase (392 aa).

Residue His-77 participates in Zn(2+) binding. Residue Asp-79 is part of the active site. Asp-110 is a binding site for Zn(2+). Glu-144 (proton acceptor) is an active-site residue. Zn(2+)-binding residues include Glu-145, Glu-173, and His-359.

It belongs to the peptidase M20A family. DapE subfamily. As to quaternary structure, homodimer. Zn(2+) is required as a cofactor. Co(2+) serves as cofactor.

It carries out the reaction N-succinyl-(2S,6S)-2,6-diaminopimelate + H2O = (2S,6S)-2,6-diaminopimelate + succinate. The protein operates within amino-acid biosynthesis; L-lysine biosynthesis via DAP pathway; LL-2,6-diaminopimelate from (S)-tetrahydrodipicolinate (succinylase route): step 3/3. Functionally, catalyzes the hydrolysis of N-succinyl-L,L-diaminopimelic acid (SDAP), forming succinate and LL-2,6-diaminopimelate (DAP), an intermediate involved in the bacterial biosynthesis of lysine and meso-diaminopimelic acid, an essential component of bacterial cell walls. The chain is Succinyl-diaminopimelate desuccinylase from Thiobacillus denitrificans (strain ATCC 25259 / T1).